A 539-amino-acid chain; its full sequence is MIO-dependent tyrosine 2,3-aminomutase (539 aa).

Catalysis depends on Tyr-63, which acts as the Proton donor/acceptor. His-93 lines the substrate pocket. The segment at residues 152–154 (ASG) is a cross-link (5-imidazolinone (Ala-Gly)). Ser-153 bears the 2,3-didehydroalanine (Ser) mark. Substrate contacts are provided by Asn-205 and Arg-311.

This sequence belongs to the TAL/TAM family. As to quaternary structure, homotetramer; dimer of dimers. In terms of processing, contains an active site 4-methylidene-imidazol-5-one (MIO), which is formed autocatalytically by cyclization and dehydration of residues Ala-Ser-Gly.

The enzyme catalyses L-tyrosine = 3-amino-3-(4-hydroxyphenyl)propanoate. It carries out the reaction L-tyrosine = (E)-4-coumarate + NH4(+). Its function is as follows. Involved in the biosynthesis of the enediyne antitumor antibiotic C-1027. Catalyzes the MIO-dependent deamination of L-tyrosine generating the corresponding alpha,beta-unsaturated acid, (S)-beta-tyrosine. The polypeptide is MIO-dependent tyrosine 2,3-aminomutase (Streptomyces globisporus).